Here is a 295-residue protein sequence, read N- to C-terminus: Ribosomal protein L11 methyltransferase (295 aa).

4 residues coordinate S-adenosyl-L-methionine: Thr138, Gly161, Asp183, and Asn230.

Belongs to the methyltransferase superfamily. PrmA family.

Its subcellular location is the cytoplasm. It catalyses the reaction L-lysyl-[protein] + 3 S-adenosyl-L-methionine = N(6),N(6),N(6)-trimethyl-L-lysyl-[protein] + 3 S-adenosyl-L-homocysteine + 3 H(+). In terms of biological role, methylates ribosomal protein L11. In Bradyrhizobium diazoefficiens (strain JCM 10833 / BCRC 13528 / IAM 13628 / NBRC 14792 / USDA 110), this protein is Ribosomal protein L11 methyltransferase.